We begin with the raw amino-acid sequence, 181 residues long: ATP synthase subunit b, chloroplastic (181 aa).

A helical membrane pass occupies residues 27 to 49; that stretch reads LATNPINLSVVLGVVIYFGKGVL.

This sequence belongs to the ATPase B chain family. F-type ATPases have 2 components, F(1) - the catalytic core - and F(0) - the membrane proton channel. F(1) has five subunits: alpha(3), beta(3), gamma(1), delta(1), epsilon(1). F(0) has four main subunits: a(1), b(1), b'(1) and c(10-14). The alpha and beta chains form an alternating ring which encloses part of the gamma chain. F(1) is attached to F(0) by a central stalk formed by the gamma and epsilon chains, while a peripheral stalk is formed by the delta, b and b' chains.

The protein localises to the plastid. It localises to the chloroplast thylakoid membrane. In terms of biological role, f(1)F(0) ATP synthase produces ATP from ADP in the presence of a proton or sodium gradient. F-type ATPases consist of two structural domains, F(1) containing the extramembraneous catalytic core and F(0) containing the membrane proton channel, linked together by a central stalk and a peripheral stalk. During catalysis, ATP synthesis in the catalytic domain of F(1) is coupled via a rotary mechanism of the central stalk subunits to proton translocation. Component of the F(0) channel, it forms part of the peripheral stalk, linking F(1) to F(0). This is ATP synthase subunit b, chloroplastic from Lemna minor (Common duckweed).